Here is a 92-residue protein sequence, read N- to C-terminus: uncharacterized protein (92 aa).

The interval 1-92 (MSDAAAPAQA…PSPSQQQVAA (92 aa)) is disordered.

This is an uncharacterized protein from Caenorhabditis elegans.